We begin with the raw amino-acid sequence, 1563 residues long: Rab-3-interacting molecule unc-10 (1563 aa).

One can recognise a RabBD domain in the interval 7 to 133 (MPDLSHLSAE…AKTGKWFQPE (127 aa)). The segment covering 25-35 (FKRQKDEEAKE) has biased composition (basic and acidic residues). The segment at 25 to 50 (FKRQKDEEAKETQISQKASEELSELD) is disordered. The FYVE-type zinc-finger motif lies at 66–121 (TQDDAICQICQKTKFADGIGHKCFYCQLRSCARCGGRAQSKNKAIWACSLCQKRQQ). Cysteine 72, cysteine 75, cysteine 88, cysteine 91, cysteine 96, cysteine 99, cysteine 113, and cysteine 116 together coordinate Zn(2+). 2 disordered regions span residues 128–466 (KWFQ…DHLN) and 582–605 (GGLDMQANRRRDKSLSLSPSRNDH). The span at 172-182 (NTPNYQNNQQP) shows a compositional bias: polar residues. 2 stretches are compositionally biased toward low complexity: residues 190 to 284 (NHNQ…RNQT) and 300 to 316 (QTPQQQPSQYQNNVGAA). Residues 326-345 (QEQHHQQMNEQRTDNNRMRE) show a composition bias toward basic and acidic residues. Composition is skewed to polar residues over residues 356 to 367 (RQPSLEQTTPMN) and 379 to 389 (QRPTFYTGNSE). Residues 395–415 (FDGQMQQGSQQNNQNQNQNNR) show a composition bias toward low complexity. A PDZ domain is found at 643–733 (HMILHRTENS…DTSVELIVSR (91 aa)). Residues 840–962 (IFGRIEVSFV…PLDGEHSLMC (123 aa)) enclose the C2 1 domain. Disordered regions lie at residues 1054 to 1163 (ENDI…YLGD), 1177 to 1311 (GQMT…GGSA), and 1346 to 1373 (VGIPGNLSSDRLTEPTPPFLKQASKEST). The span at 1086–1097 (WTQNHQRQSGYT) shows a compositional bias: polar residues. Basic residues predominate over residues 1112-1121 (YNRRQQRRPR). Residues 1129–1154 (MEREDMYDPTRKHRDDNEYSMRESVR) are compositionally biased toward basic and acidic residues. Positions 1181–1230 (PKQHNQQHQPHPLSQAHQQQQTAGVQPQHHQGFQQQQHPQQPNQQMQQMQ) are enriched in low complexity. Over residues 1242–1255 (GSETLSVHSTNSMP) the composition is skewed to polar residues. Residues 1256 to 1277 (TTMTTVNRRNMNANNTSNDNTS) are compositionally biased toward low complexity. Positions 1278–1288 (FAETPTANTNR) are enriched in polar residues. Residues 1297–1311 (NSLASSSSVAGGGSA) show a composition bias toward low complexity. Positions 1417–1536 (VLGEIQIALM…LGSQPLIGWY (120 aa)) constitute a C2 2 domain.

In terms of tissue distribution, restricted to discrete puncta in synapse-rich regions of the nervous system including the nerve ring, the ventral nerve cord and the dorsal nerve cord. Localized expression was found in the head.

Its subcellular location is the synapse. In terms of biological role, regulates the efficiency of a post-docking step of the release pathway. Acts after vesicle docking likely via regulating priming. May regulate the conformational changes in syntaxin. Binding of vesicles via rab-3[GTP] to Rim may signal the presence of a docked synaptic vesicle. Rim may then signal to unc-13 to change the conformation of syntaxin from the closed to the open state. Syntaxin could then engage synaptobrevin on the docked vesicle to form SNARE complexes and to prime the vesicle for release. Not required for the development or the structural organization of synapses. May play a role in regulating entry into the dauer state. This chain is Rab-3-interacting molecule unc-10, found in Caenorhabditis elegans.